We begin with the raw amino-acid sequence, 139 residues long: Large ribosomal subunit protein uL16 (139 aa).

Positions 1–19 are enriched in basic residues; sequence MLIPRRVKYRKQHHPKRTG. The tract at residues 1-23 is disordered; the sequence is MLIPRRVKYRKQHHPKRTGAAKG.

This sequence belongs to the universal ribosomal protein uL16 family. As to quaternary structure, part of the 50S ribosomal subunit.

Binds 23S rRNA and is also seen to make contacts with the A and possibly P site tRNAs. The protein is Large ribosomal subunit protein uL16 of Cutibacterium acnes (strain DSM 16379 / KPA171202) (Propionibacterium acnes).